We begin with the raw amino-acid sequence, 273 residues long: Putative pyruvate, phosphate dikinase regulatory protein (273 aa).

An ADP-binding site is contributed by 149–156 (GPSRTSKT).

Belongs to the pyruvate, phosphate/water dikinase regulatory protein family. PDRP subfamily.

The enzyme catalyses N(tele)-phospho-L-histidyl/L-threonyl-[pyruvate, phosphate dikinase] + ADP = N(tele)-phospho-L-histidyl/O-phospho-L-threonyl-[pyruvate, phosphate dikinase] + AMP + H(+). The catalysed reaction is N(tele)-phospho-L-histidyl/O-phospho-L-threonyl-[pyruvate, phosphate dikinase] + phosphate + H(+) = N(tele)-phospho-L-histidyl/L-threonyl-[pyruvate, phosphate dikinase] + diphosphate. In terms of biological role, bifunctional serine/threonine kinase and phosphorylase involved in the regulation of the pyruvate, phosphate dikinase (PPDK) by catalyzing its phosphorylation/dephosphorylation. The sequence is that of Putative pyruvate, phosphate dikinase regulatory protein from Rickettsia felis (strain ATCC VR-1525 / URRWXCal2) (Rickettsia azadi).